The primary structure comprises 528 residues: Cytochrome P450 monooxygenase vrcB (528 aa).

The helical transmembrane segment at 5-27 (YGLFFAAVALYSVALVIYRLYLH) threads the bilayer. Cys470 is a binding site for heme.

The protein belongs to the cytochrome P450 family. It depends on heme as a cofactor.

It localises to the membrane. The catalysed reaction is variecoladiene + 4 reduced [NADPH--hemoprotein reductase] + 4 O2 = variecolin + 4 oxidized [NADPH--hemoprotein reductase] + 6 H2O + 4 H(+). Its pathway is secondary metabolite biosynthesis; terpenoid biosynthesis. Functionally, cytochrome P450 monooxygenase; part of the gene cluster that mediates the biosynthesis of the sesterterpene variecolin. The first step in the pathway is performed by the variecoladiene synthase vrcA that possesses both prenyl transferase and terpene cyclase activity, converting isopentenyl diphosphate and dimethylallyl diphosphate into geranylfarnesyl pyrophosphate (GFPP) and then converting GFPP into the tetracyclic variecoladiene. The cytochrome P450 monooxygenase vrcB then catalyzes multiple oxidations at C-5 and C-20 positions to yield variecolin. This chain is Cytochrome P450 monooxygenase vrcB, found in Aspergillus aculeatus (strain ATCC 16872 / CBS 172.66 / WB 5094).